We begin with the raw amino-acid sequence, 339 residues long: Glyceraldehyde-3-phosphate dehydrogenase (339 aa).

NAD(+)-binding positions include 11–12 and G110; that span reads TI. D-glyceraldehyde 3-phosphate is bound at residue 139–141; it reads SCN. The Nucleophile role is filled by C140. NAD(+) is bound at residue R168. 194–195 is a binding site for D-glyceraldehyde 3-phosphate; the sequence is HG. Residue Q301 participates in NAD(+) binding.

The protein belongs to the glyceraldehyde-3-phosphate dehydrogenase family. As to quaternary structure, homotetramer.

It is found in the cytoplasm. The catalysed reaction is D-glyceraldehyde 3-phosphate + phosphate + NADP(+) = (2R)-3-phospho-glyceroyl phosphate + NADPH + H(+). The enzyme catalyses D-glyceraldehyde 3-phosphate + phosphate + NAD(+) = (2R)-3-phospho-glyceroyl phosphate + NADH + H(+). It participates in carbohydrate degradation; glycolysis; pyruvate from D-glyceraldehyde 3-phosphate: step 1/5. This is Glyceraldehyde-3-phosphate dehydrogenase from Methanospirillum hungatei JF-1 (strain ATCC 27890 / DSM 864 / NBRC 100397 / JF-1).